Reading from the N-terminus, the 161-residue chain is Ribonuclease P protein component 2 (161 aa).

Belongs to the eukaryotic/archaeal RNase P protein component 2 family. In terms of assembly, consists of a catalytic RNA component and at least 4-5 protein subunits.

It is found in the cytoplasm. The catalysed reaction is Endonucleolytic cleavage of RNA, removing 5'-extranucleotides from tRNA precursor.. Its function is as follows. Part of ribonuclease P, a protein complex that generates mature tRNA molecules by cleaving their 5'-ends. This Natronomonas pharaonis (strain ATCC 35678 / DSM 2160 / CIP 103997 / JCM 8858 / NBRC 14720 / NCIMB 2260 / Gabara) (Halobacterium pharaonis) protein is Ribonuclease P protein component 2.